The following is a 345-amino-acid chain: Matrix protein (345 aa).

The disordered stretch occupies residues 148-185 (KKKSKAKSAEGPSASTEDIKDSDTKGNQDIGDNGDLNS). A compositionally biased stretch (basic and acidic residues) spans 164–173 (EDIKDSDTKG).

It is found in the virion. The sequence is that of Matrix protein (M2) from Aphis (Hairy beggarticks).